Consider the following 194-residue polypeptide: Ras-related protein RabU (194 aa).

A GTP-binding site is contributed by 19–27 (GYDYECGIK). An Effector region motif is present at residues 42 to 50 (PESQVGVDF). GTP-binding positions include 68 to 72 (PQNKY) and 130 to 133 (NNSE).

This sequence belongs to the small GTPase superfamily. Rab family.

The chain is Ras-related protein RabU (rabU) from Dictyostelium discoideum (Social amoeba).